The following is a 364-amino-acid chain: Leucine-rich repeat-containing protein 19 (364 aa).

A signal peptide spans 1 to 20; that stretch reads MKVTRFMFWLFSMLLPSVKS. Topologically, residues 21–264 are extracellular; it reads QASETEVPCN…SEHEPLGKSW (244 aa). N-linked (GlcNAc...) asparagine glycosylation is found at N30, N35, N46, and N88. LRR repeat units lie at residues 44 to 69, 70 to 93, 94 to 117, 118 to 141, 143 to 163, and 164 to 190; these read STNVTILDLSYNRITLNAADSRVLQM, YSLLTELYLMENNIIALYNSSFRN, LLNLEILNICGNSISVIQQGSFVG, LNELKQLFLCQNKILQLNPDTFVP, NNLKVLNLQGNLIRLFDAPQL, and PHLEILTLDGNPWNCTCGLLELHNWLN. The 52-residue stretch at 174–225 folds into the LRRCT domain; sequence NPWNCTCGLLELHNWLNTSNVTLENENMTMCSYPDELKHDSIKSAPFTTECH. Residues N177, N190, N193, N200, N241, N245, and N250 are each glycosylated (N-linked (GlcNAc...) asparagine). Residues 265–285 traverse the membrane as a helical segment; sequence AFLVGVVATVLLTSLLIFIAI. Residues 286–364 are Cytoplasmic-facing; the sequence is KCPVWYNILL…IDINEVHEEK (79 aa).

As to quaternary structure, interacts with TRAF2 and TRAF6. As to expression, strongly expressed in kidney, also expressed in spleen, intestine and colon. Highly expressed in epithelial cells. In kidney, mainly expressed in renal collecting duct epithelial cells.

It is found in the membrane. With respect to regulation, activated by TLR ligands such as LPS, bacterial DNA and peptidoglycan. Its function is as follows. Pathogen-recognition receptor which mediates the activation of TRAF2- and TRAF6 NF-kappa-B signaling pathways and induces the expression of pro-inflammatory cytokines. In kidney, prevents infection by uropathogenic bacteria by inducing the production of cytokines, chemokines and antimicrobial substances. In gut, involved in host-microbiota interactions, plays a critical role in promoting the recruitment of immune cells and intestinal inflammation. This is Leucine-rich repeat-containing protein 19 from Mus musculus (Mouse).